A 443-amino-acid polypeptide reads, in one-letter code: UDP-N-acetylmuramate--L-alanine ligase (443 aa).

110 to 116 (GAHGKTS) lines the ATP pocket.

It belongs to the MurCDEF family.

Its subcellular location is the cytoplasm. It carries out the reaction UDP-N-acetyl-alpha-D-muramate + L-alanine + ATP = UDP-N-acetyl-alpha-D-muramoyl-L-alanine + ADP + phosphate + H(+). It functions in the pathway cell wall biogenesis; peptidoglycan biosynthesis. Functionally, cell wall formation. This Streptococcus suis (strain 98HAH33) protein is UDP-N-acetylmuramate--L-alanine ligase.